A 159-amino-acid chain; its full sequence is Ribosomal RNA large subunit methyltransferase H (159 aa).

Residues G108 and 127–132 contribute to the S-adenosyl-L-methionine site; that span reads FSKMTF.

Belongs to the RNA methyltransferase RlmH family. As to quaternary structure, homodimer.

Its subcellular location is the cytoplasm. The enzyme catalyses pseudouridine(1915) in 23S rRNA + S-adenosyl-L-methionine = N(3)-methylpseudouridine(1915) in 23S rRNA + S-adenosyl-L-homocysteine + H(+). Functionally, specifically methylates the pseudouridine at position 1915 (m3Psi1915) in 23S rRNA. The polypeptide is Ribosomal RNA large subunit methyltransferase H (Clostridium perfringens (strain ATCC 13124 / DSM 756 / JCM 1290 / NCIMB 6125 / NCTC 8237 / Type A)).